Consider the following 442-residue polypeptide: Glycolipid 2-alpha-mannosyltransferase (442 aa).

At 1-11 (MALFLSKRLLR) the chain is on the cytoplasmic side. A helical; Signal-anchor for type II membrane protein membrane pass occupies residues 12-30 (FTVIAGAVIVLLLTLNSNS). The tract at residues 31–118 (RTQQYIPSSI…YITPSFANKA (88 aa)) is stem region. Topologically, residues 31–442 (RTQQYIPSSI…KPKNWKKFRE (412 aa)) are lumenal. The interval 68–95 (EQSALNSEASEDSEAMDEESKALKAAAE) is disordered. Positions 85–95 (EESKALKAAAE) are enriched in basic and acidic residues. The segment at 119-442 (GKPKACYVTL…KPKNWKKFRE (324 aa)) is catalytic. An N-linked (GlcNAc...) asparagine glycan is attached at N197. E329 (nucleophile) is an active-site residue.

Belongs to the glycosyltransferase 15 family. The cofactor is Mn(2+).

It localises to the golgi apparatus membrane. Its pathway is protein modification; protein glycosylation. Functionally, mannosyltransferase that transfers an alpha-D-mannosyl residue from GDP-mannose into lipid-linked oligosaccharide, forming an alpha-(1-&gt;2)-D-mannosyl-D-mannose linkage. Required for the attachment of the third mannose residue of O-linked saccharides. The chain is Glycolipid 2-alpha-mannosyltransferase (KRE2) from Saccharomyces cerevisiae (strain ATCC 204508 / S288c) (Baker's yeast).